Consider the following 179-residue polypeptide: Monothiol glutaredoxin-S12, chloroplastic (179 aa).

A chloroplast-targeting transit peptide spans 1–61 (MVAATVNLAN…WPPLRCSSVK (61 aa)). At Ala-62 the chain carries N-acetylalanine. The 102-residue stretch at 75 to 176 (EETVKTTVAE…AILAEANGKN (102 aa)) folds into the Glutaredoxin domain. Cys-95 contributes to the [2Fe-2S] cluster binding site.

This sequence belongs to the glutaredoxin family. CPYC subfamily.

It localises to the plastid. Its subcellular location is the chloroplast. Its function is as follows. May only reduce GSH-thiol disulfides, but not protein disulfides. This Arabidopsis thaliana (Mouse-ear cress) protein is Monothiol glutaredoxin-S12, chloroplastic (GRXS12).